The primary structure comprises 322 residues: Heat-inducible transcription repressor HrcA (322 aa).

Belongs to the HrcA family.

In terms of biological role, negative regulator of class I heat shock genes (grpE-dnaK-dnaJ and groELS operons). Prevents heat-shock induction of these operons. The protein is Heat-inducible transcription repressor HrcA of Staphylococcus carnosus (strain TM300).